A 247-amino-acid chain; its full sequence is Type II restriction enzyme SmaI (247 aa).

Mg(2+) serves as cofactor. It depends on K(+) as a cofactor.

It carries out the reaction Endonucleolytic cleavage of DNA to give specific double-stranded fragments with terminal 5'-phosphates.. In terms of biological role, a P subtype restriction enzyme that recognizes the double-stranded sequence 5'-CCCGGG-3' and cleaves after C-3. This is Type II restriction enzyme SmaI (smaIR) from Serratia marcescens.